The primary structure comprises 372 residues: Alanine racemase (372 aa).

The active-site Proton acceptor; specific for D-alanine is the lysine 41. Lysine 41 carries the N6-(pyridoxal phosphate)lysine modification. Residue arginine 139 participates in substrate binding. Residue tyrosine 268 is the Proton acceptor; specific for L-alanine of the active site. Methionine 316 is a substrate binding site.

The protein belongs to the alanine racemase family. Pyridoxal 5'-phosphate is required as a cofactor.

The catalysed reaction is L-alanine = D-alanine. The protein operates within amino-acid biosynthesis; D-alanine biosynthesis; D-alanine from L-alanine: step 1/1. In terms of biological role, catalyzes the interconversion of L-alanine and D-alanine. May also act on other amino acids. This Borreliella burgdorferi (strain ATCC 35210 / DSM 4680 / CIP 102532 / B31) (Borrelia burgdorferi) protein is Alanine racemase (alr).